The primary structure comprises 231 residues: Ribose-5-phosphate isomerase A (231 aa).

Substrate-binding positions include 32 to 35, 85 to 88, and 98 to 101; these read TGST, DGAD, and KGGG. Glu107 acts as the Proton acceptor in catalysis. Substrate is bound at residue Lys125.

It belongs to the ribose 5-phosphate isomerase family. Homodimer.

The catalysed reaction is aldehydo-D-ribose 5-phosphate = D-ribulose 5-phosphate. It functions in the pathway carbohydrate degradation; pentose phosphate pathway; D-ribose 5-phosphate from D-ribulose 5-phosphate (non-oxidative stage): step 1/1. Its function is as follows. Catalyzes the reversible conversion of ribose-5-phosphate to ribulose 5-phosphate. In Paraburkholderia xenovorans (strain LB400), this protein is Ribose-5-phosphate isomerase A.